The sequence spans 93 residues: MTDFHRIKRLPPYVFEQVNRIKAAARARGADIIDLGMGNPDLDAPRHVIEKLVETAGKPRTDRYSASKGIAGLRRAQAGYYQRRFGVSLNPDT.

This sequence belongs to the class-I pyridoxal-phosphate-dependent aminotransferase family. In terms of assembly, homodimer. Pyridoxal 5'-phosphate is required as a cofactor.

The protein resides in the cytoplasm. It catalyses the reaction L-aspartate + 2-oxoglutarate = oxaloacetate + L-glutamate. In Methylorubrum extorquens (Methylobacterium dichloromethanicum), this protein is Putative aspartate aminotransferase.